A 54-amino-acid polypeptide reads, in one-letter code: LAAVDCSEYPKPACTMEHRPLCGSDNQTYDNKCNFCNAVVESNGTLTLSHFGKC.

The Kazal-like domain occupies 4–54 (VDCSEYPKPACTMEHRPLCGSDNQTYDNKCNFCNAVVESNGTLTLSHFGKC). Intrachain disulfides connect C6-C36, C14-C33, and C22-C54. N-linked (GlcNAc...) asparagine glycosylation occurs at N43.

It localises to the secreted. This is Ovomucoid from Guttera pucherani (Eastern crested guineafowl).